Here is a 361-residue protein sequence, read N- to C-terminus: Histidinol-phosphate aminotransferase (361 aa).

At Lys-219 the chain carries N6-(pyridoxal phosphate)lysine.

It belongs to the class-II pyridoxal-phosphate-dependent aminotransferase family. Histidinol-phosphate aminotransferase subfamily. Homodimer. Pyridoxal 5'-phosphate serves as cofactor.

The enzyme catalyses L-histidinol phosphate + 2-oxoglutarate = 3-(imidazol-4-yl)-2-oxopropyl phosphate + L-glutamate. The protein operates within amino-acid biosynthesis; L-histidine biosynthesis; L-histidine from 5-phospho-alpha-D-ribose 1-diphosphate: step 7/9. The polypeptide is Histidinol-phosphate aminotransferase (Acinetobacter baumannii (strain AB307-0294)).